The chain runs to 150 residues: UPF0178 protein BceJ2315_16760 (150 aa).

Belongs to the UPF0178 family.

In Burkholderia cenocepacia (strain ATCC BAA-245 / DSM 16553 / LMG 16656 / NCTC 13227 / J2315 / CF5610) (Burkholderia cepacia (strain J2315)), this protein is UPF0178 protein BceJ2315_16760.